A 266-amino-acid chain; its full sequence is Undecaprenyl-diphosphatase (266 aa).

7 consecutive transmembrane segments (helical) span residues 41–61 (NLAF…VVLW), 80–100 (TKYV…GVFF), 107–127 (IFGS…ALLA), 140–160 (ISMK…MPGL), 180–200 (LAQF…LLDV), 213–233 (IPAL…CVAC), and 245–265 (LIYF…CTLL).

Belongs to the UppP family.

The protein localises to the cell inner membrane. It carries out the reaction di-trans,octa-cis-undecaprenyl diphosphate + H2O = di-trans,octa-cis-undecaprenyl phosphate + phosphate + H(+). Functionally, catalyzes the dephosphorylation of undecaprenyl diphosphate (UPP). Confers resistance to bacitracin. This is Undecaprenyl-diphosphatase from Parabacteroides distasonis (strain ATCC 8503 / DSM 20701 / CIP 104284 / JCM 5825 / NCTC 11152).